The primary structure comprises 174 residues: Nicotinamide-nucleotide adenylyltransferase (174 aa).

It belongs to the archaeal NMN adenylyltransferase family.

The protein resides in the cytoplasm. It carries out the reaction beta-nicotinamide D-ribonucleotide + ATP + H(+) = diphosphate + NAD(+). The protein operates within cofactor biosynthesis; NAD(+) biosynthesis; NAD(+) from nicotinamide D-ribonucleotide: step 1/1. This is Nicotinamide-nucleotide adenylyltransferase from Methanospirillum hungatei JF-1 (strain ATCC 27890 / DSM 864 / NBRC 100397 / JF-1).